Reading from the N-terminus, the 185-residue chain is Adenylyl-sulfate kinase (185 aa).

Residue 13–20 coordinates ATP; that stretch reads GLSGAGKT. Ser87 functions as the Phosphoserine intermediate in the catalytic mechanism.

It belongs to the APS kinase family.

It catalyses the reaction adenosine 5'-phosphosulfate + ATP = 3'-phosphoadenylyl sulfate + ADP + H(+). It participates in sulfur metabolism; hydrogen sulfide biosynthesis; sulfite from sulfate: step 2/3. Functionally, catalyzes the synthesis of activated sulfate. This chain is Adenylyl-sulfate kinase, found in Halothermothrix orenii (strain H 168 / OCM 544 / DSM 9562).